Consider the following 207-residue polypeptide: uncharacterized protein (207 aa).

A signal peptide spans 1–19 (MRHGLLALICWLCCVVAHS).

It to P.aeruginosa PA4490 and T.maritima TM0986.

This is an uncharacterized protein from Escherichia coli (strain K12).